Reading from the N-terminus, the 106-residue chain is Thiosulfate sulfurtransferase GlpE (106 aa).

The Rhodanese domain occupies 16 to 104; that stretch reads REQGAVLVDV…WRATYPDETV (89 aa). Cys64 functions as the Cysteine persulfide intermediate in the catalytic mechanism.

The protein belongs to the GlpE family.

It localises to the cytoplasm. It catalyses the reaction thiosulfate + hydrogen cyanide = thiocyanate + sulfite + 2 H(+). The catalysed reaction is thiosulfate + [thioredoxin]-dithiol = [thioredoxin]-disulfide + hydrogen sulfide + sulfite + 2 H(+). Transferase that catalyzes the transfer of sulfur from thiosulfate to thiophilic acceptors such as cyanide or dithiols. May function in a CysM-independent thiosulfate assimilation pathway by catalyzing the conversion of thiosulfate to sulfite, which can then be used for L-cysteine biosynthesis. The sequence is that of Thiosulfate sulfurtransferase GlpE from Pseudomonas savastanoi pv. phaseolicola (strain 1448A / Race 6) (Pseudomonas syringae pv. phaseolicola (strain 1448A / Race 6)).